Here is a 159-residue protein sequence, read N- to C-terminus: 2-C-methyl-D-erythritol 2,4-cyclodiphosphate synthase (159 aa).

2 residues coordinate a divalent metal cation: aspartate 8 and histidine 10. Residues aspartate 8–histidine 10 and histidine 34–serine 35 each bind 4-CDP-2-C-methyl-D-erythritol 2-phosphate. Histidine 42 contributes to the a divalent metal cation binding site. Residues aspartate 56–glycine 58, phenylalanine 61–aspartate 65, alanine 100–leucine 106, threonine 132–glutamate 135, phenylalanine 139, and arginine 142 contribute to the 4-CDP-2-C-methyl-D-erythritol 2-phosphate site.

It belongs to the IspF family. As to quaternary structure, homotrimer. It depends on a divalent metal cation as a cofactor.

It carries out the reaction 4-CDP-2-C-methyl-D-erythritol 2-phosphate = 2-C-methyl-D-erythritol 2,4-cyclic diphosphate + CMP. The protein operates within isoprenoid biosynthesis; isopentenyl diphosphate biosynthesis via DXP pathway; isopentenyl diphosphate from 1-deoxy-D-xylulose 5-phosphate: step 4/6. Functionally, involved in the biosynthesis of isopentenyl diphosphate (IPP) and dimethylallyl diphosphate (DMAPP), two major building blocks of isoprenoid compounds. Catalyzes the conversion of 4-diphosphocytidyl-2-C-methyl-D-erythritol 2-phosphate (CDP-ME2P) to 2-C-methyl-D-erythritol 2,4-cyclodiphosphate (ME-CPP) with a corresponding release of cytidine 5-monophosphate (CMP). The protein is 2-C-methyl-D-erythritol 2,4-cyclodiphosphate synthase of Escherichia coli O45:K1 (strain S88 / ExPEC).